The primary structure comprises 748 residues: Tyrosine--tRNA ligase 2, cytoplasmic (748 aa).

At methionine 1 the chain carries N-acetylmethionine. The short motif at 441–449 is the 'HIGH' region element; it reads PSGRMHIAQ. Positions 564, 568, 571, and 586 each coordinate L-tyrosine. Residues 623–627 carry the 'KMSKS' region motif; sequence KMSKS. Lysine 626 is an ATP binding site.

Belongs to the class-I aminoacyl-tRNA synthetase family.

The protein localises to the cytoplasm. The protein resides in the cytosol. It carries out the reaction tRNA(Tyr) + L-tyrosine + ATP = L-tyrosyl-tRNA(Tyr) + AMP + diphosphate + H(+). Catalyzes the attachment of tyrosine to tRNA(Tyr) in a two-step reaction: tyrosine is first activated by ATP to form Tyr-AMP and then transferred to the acceptor end of tRNA(Tyr). The sequence is that of Tyrosine--tRNA ligase 2, cytoplasmic from Arabidopsis thaliana (Mouse-ear cress).